The following is a 246-amino-acid chain: MKSFYFGRGALASTGGCVVLAVAALMFVFLPALSGGGHGHVRLGSWGGVALTNAPDSLFSQQYSALAQTAERYNLYPKDAQEREGMDRRVLRAAFRAAVVQLAGTEQTKQSGFTLSEELLDREVLSFYADADGTYSPQRYQGTPEHVRLSQRKKMRDSLLSDQYLYHLFGKETGRGGLKLNSRELRFVQDMAKKERSFRYVVLGEERFPAERVSRTGKSMPTFLPCITFPCSPTPRKRTRAARHAL.

A helical membrane pass occupies residues 7-29; the sequence is GRGALASTGGCVVLAVAALMFVF.

The protein resides in the membrane. This is an uncharacterized protein from Treponema pallidum (strain Nichols).